Here is a 122-residue protein sequence, read N- to C-terminus: Small ribosomal subunit protein uS13 (122 aa).

Residues 97–122 form a disordered region; the sequence is PVRGQRTHTNARTRKGPAKAIAGKKK.

This sequence belongs to the universal ribosomal protein uS13 family. In terms of assembly, part of the 30S ribosomal subunit. Forms a loose heterodimer with protein S19. Forms two bridges to the 50S subunit in the 70S ribosome.

Functionally, located at the top of the head of the 30S subunit, it contacts several helices of the 16S rRNA. In the 70S ribosome it contacts the 23S rRNA (bridge B1a) and protein L5 of the 50S subunit (bridge B1b), connecting the 2 subunits; these bridges are implicated in subunit movement. Contacts the tRNAs in the A and P-sites. The protein is Small ribosomal subunit protein uS13 of Bartonella henselae (strain ATCC 49882 / DSM 28221 / CCUG 30454 / Houston 1) (Rochalimaea henselae).